A 414-amino-acid chain; its full sequence is Argininosuccinate synthase (414 aa).

ATP is bound by residues 15–23 (AYSGGLDTS) and A42. L-citrulline contacts are provided by Y93 and S98. G123 provides a ligand contact to ATP. Residues T125, N129, and D130 each contribute to the L-aspartate site. Residue N129 participates in L-citrulline binding. Residues R133, S182, S191, E267, and Y279 each coordinate L-citrulline.

It belongs to the argininosuccinate synthase family. Type 1 subfamily. Homotetramer.

It is found in the cytoplasm. The catalysed reaction is L-citrulline + L-aspartate + ATP = 2-(N(omega)-L-arginino)succinate + AMP + diphosphate + H(+). Its pathway is amino-acid biosynthesis; L-arginine biosynthesis; L-arginine from L-ornithine and carbamoyl phosphate: step 2/3. The sequence is that of Argininosuccinate synthase from Deinococcus geothermalis (strain DSM 11300 / CIP 105573 / AG-3a).